The chain runs to 346 residues: E3 ubiquitin-protein ligase RNF146-A (346 aa).

An RING-type zinc finger spans residues 37 to 75 (CAICLQTCVHPVSLPCKHVFCYLCVKGASWLGKRCALCR). Residues 91–167 (PELKAASRGN…EHGRRRKIKR (77 aa)) form the WWE domain. Disordered regions lie at residues 195–240 (SSAD…GTSL) and 256–301 (ERSH…ALVA). Residues 202 to 216 (SVPAQSGASVQSSSV) are compositionally biased toward low complexity. Acidic residues predominate over residues 281-295 (SIEETESDASSDSED).

As to quaternary structure, interacts with poly-ADP-ribosylated AXIN1, AXIN2, BLZF1 and CASC3. Post-translationally, ubiquitinated; autoubiquitinated. Autoubiquitination is enhanced upon poly(ADP-ribose)-binding.

The protein localises to the cytoplasm. Its subcellular location is the cytosol. It carries out the reaction S-ubiquitinyl-[E2 ubiquitin-conjugating enzyme]-L-cysteine + [acceptor protein]-L-lysine = [E2 ubiquitin-conjugating enzyme]-L-cysteine + N(6)-ubiquitinyl-[acceptor protein]-L-lysine.. It participates in protein modification; protein ubiquitination. Functionally, E3 ubiquitin-protein ligase that specifically binds poly-ADP-ribosylated proteins and mediates their ubiquitination and subsequent degradation. Acts as an activator of the Wnt signaling pathway by mediating the ubiquitination of poly-ADP-ribosylated AXIN1 and AXIN2, 2 key components of the beta-catenin destruction complex. Acts in cooperation with tankyrase proteins (TNKS and TNKS2), which mediate poly-ADP-ribosylation of target proteins AXIN1, AXIN2, BLZF1, CASC3, TNKS and TNKS2. Recognizes and binds tankyrase-dependent poly-ADP-ribosylated proteins via its WWE domain and mediates their ubiquitination. In Bos taurus (Bovine), this protein is E3 ubiquitin-protein ligase RNF146-A (RNF146A).